We begin with the raw amino-acid sequence, 288 residues long: MNELANRSFSKMNGIGNEIVVLDLRDHPVAVSAADARAIASEVPYDQLMVLQPPRTPGTEAFVRIYNNDGSESSACGNGMRCVARQVFATSASDALTFETRAGLLNCWRPAPNLYTVDMGPPKLGWKDIPLAEEFRDTRSIELQIGPIDAPVLHTPSVVSMGNPHAIFWVDDVNAHDLARFGPLLENHPIFPERANITLAQIVDRDHIVIRTWERGVGLTKACGSAACATAVAAARLRRVNRVVHITLPGGELGIEWRASDDHVLMTGPAAFEFEGRFDPAVFAAAAS.

Substrate is bound by residues asparagine 17, glutamine 47, and asparagine 67. The active-site Proton donor is cysteine 76. Substrate is bound by residues 77 to 78 (GN), asparagine 163, asparagine 196, and 214 to 215 (ER). Residue cysteine 223 is the Proton acceptor of the active site. Residue 224–225 (GS) coordinates substrate.

This sequence belongs to the diaminopimelate epimerase family. In terms of assembly, homodimer.

The protein localises to the cytoplasm. The enzyme catalyses (2S,6S)-2,6-diaminopimelate = meso-2,6-diaminopimelate. It functions in the pathway amino-acid biosynthesis; L-lysine biosynthesis via DAP pathway; DL-2,6-diaminopimelate from LL-2,6-diaminopimelate: step 1/1. Its function is as follows. Catalyzes the stereoinversion of LL-2,6-diaminopimelate (L,L-DAP) to meso-diaminopimelate (meso-DAP), a precursor of L-lysine and an essential component of the bacterial peptidoglycan. This chain is Diaminopimelate epimerase, found in Rhodopseudomonas palustris (strain BisB18).